The sequence spans 409 residues: Nucleoprotein (409 aa).

4 disordered regions span residues 1–32 (MASGKTTGKTDAPAPVIKLGGPKPPKVGSSGN), 44–63 (LNSPPPKFEGSGVPDNENLK), 120–145 (GADTKSRSNQGTRDPDKFDQYPLRFS), and 164–193 (RSGRSTAASSAASSRAPSRDGSRGRRSGAE). A compositionally biased stretch (low complexity) spans 15-31 (PVIKLGGPKPPKVGSSG). Residues 29–160 (SSGNASWFQA…GNFRWDFIPI (132 aa)) are RNA-binding. The CoV N NTD domain occupies 31–156 (GNASWFQALK…GGPDGNFRWD (126 aa)). Positions 164-179 (RSGRSTAASSAASSRA) are enriched in low complexity. Residues 180–192 (PSRDGSRGRRSGA) show a composition bias toward basic and acidic residues. Ser190 bears the Phosphoserine; by host mark. The 117-residue stretch at 215–331 (TKAKADEMAH…QCVDGVGTRP (117 aa)) folds into the CoV N CTD domain. The dimerization stretch occupies residues 226–333 (RYCKRTIPPG…VDGVGTRPKD (108 aa)). An intrachain disulfide couples Cys320 to Cys323. The tract at residues 327-409 (VGTRPKDDEP…GESALGENEL (83 aa)) is disordered. Residues 341-355 (RPNSRPATRTSSPAP) are compositionally biased toward polar residues. Residues 368 to 384 (KQDDEVDKALTSDEERN) show a composition bias toward basic and acidic residues. At Thr378 the chain carries Phosphothreonine; by host. Position 379 is a phosphoserine; by host (Ser379).

This sequence belongs to the gammacoronavirus nucleocapsid protein family. As to quaternary structure, homooligomer. Both monomeric and oligomeric forms interact with RNA. Interacts with protein M. Interacts with NSP3; this interaction serves to tether the genome to the newly translated replicase-transcriptase complex at a very early stage of infection. In terms of processing, ADP-ribosylated. The ADP-ribosylation is retained in the virion during infection. Post-translationally, phosphorylated on serine and threonine residues.

The protein resides in the virion. Its subcellular location is the host endoplasmic reticulum-Golgi intermediate compartment. It localises to the host Golgi apparatus. Packages the positive strand viral genome RNA into a helical ribonucleocapsid (RNP) and plays a fundamental role during virion assembly through its interactions with the viral genome and membrane protein M. Plays an important role in enhancing the efficiency of subgenomic viral RNA transcription as well as viral replication. The sequence is that of Nucleoprotein from Avian infectious bronchitis virus (strain D1466) (IBV).